Here is a 410-residue protein sequence, read N- to C-terminus: Formyl-CoA:oxalate CoA-transferase (410 aa).

Residues 18–19, 72–75, 96–98, Arg104, and 136–139 each bind CoA; these read QS, LNTK, NFG, and KAYE. Catalysis depends on Asp168, which acts as the Nucleophile. Positions 221-245 are disordered; the sequence is PLAEYPNEDFGDEVPRSGNASGGGQ. 243–245 serves as a coordination point for substrate; the sequence is GGQ.

The protein belongs to the CoA-transferase III family. Frc subfamily. As to quaternary structure, homodimer.

The catalysed reaction is formyl-CoA + oxalate = oxalyl-CoA + formate. The protein operates within metabolic intermediate degradation; oxalate degradation; CO(2) and formate from oxalate: step 1/2. Functionally, involved in the catabolism of oxalate and in the adapatation to low pH via the induction of the oxalate-dependent acid tolerance response (ATR). Catalyzes the transfer of the CoA moiety from formyl-CoA to oxalate. This Streptomyces coelicolor (strain ATCC BAA-471 / A3(2) / M145) protein is Formyl-CoA:oxalate CoA-transferase.